A 227-amino-acid polypeptide reads, in one-letter code: NADH-quinone oxidoreductase subunit C (227 aa).

Belongs to the complex I 30 kDa subunit family. In terms of assembly, NDH-1 is composed of 14 different subunits. Subunits NuoB, C, D, E, F, and G constitute the peripheral sector of the complex.

It is found in the cell inner membrane. The enzyme catalyses a quinone + NADH + 5 H(+)(in) = a quinol + NAD(+) + 4 H(+)(out). Its function is as follows. NDH-1 shuttles electrons from NADH, via FMN and iron-sulfur (Fe-S) centers, to quinones in the respiratory chain. The immediate electron acceptor for the enzyme in this species is believed to be ubiquinone. Couples the redox reaction to proton translocation (for every two electrons transferred, four hydrogen ions are translocated across the cytoplasmic membrane), and thus conserves the redox energy in a proton gradient. In Coxiella burnetii (strain RSA 331 / Henzerling II), this protein is NADH-quinone oxidoreductase subunit C.